The chain runs to 32 residues: Trypsin inhibitor 2b (32 aa).

Cystine bridges form between C3-C20, C10-C22, and C16-C29.

This sequence belongs to the protease inhibitor I7 (squash-type serine protease inhibitor) family.

It localises to the secreted. Its function is as follows. Inhibits trypsin. In Cucumis sativus (Cucumber), this protein is Trypsin inhibitor 2b.